A 177-amino-acid chain; its full sequence is Peptide methionine sulfoxide reductase MsrA (177 aa).

Cys-15 is an active-site residue.

Belongs to the MsrA Met sulfoxide reductase family.

It carries out the reaction L-methionyl-[protein] + [thioredoxin]-disulfide + H2O = L-methionyl-(S)-S-oxide-[protein] + [thioredoxin]-dithiol. The enzyme catalyses [thioredoxin]-disulfide + L-methionine + H2O = L-methionine (S)-S-oxide + [thioredoxin]-dithiol. In terms of biological role, has an important function as a repair enzyme for proteins that have been inactivated by oxidation. Catalyzes the reversible oxidation-reduction of methionine sulfoxide in proteins to methionine. This Listeria monocytogenes serotype 4a (strain HCC23) protein is Peptide methionine sulfoxide reductase MsrA.